The sequence spans 384 residues: Alcohol dehydrogenase class-3 (384 aa).

Zn(2+)-binding residues include cysteine 48, histidine 70, cysteine 100, cysteine 103, cysteine 106, cysteine 114, and cysteine 177.

This sequence belongs to the zinc-containing alcohol dehydrogenase family. Class-III subfamily. As to quaternary structure, homodimer. It depends on Zn(2+) as a cofactor.

It localises to the cytoplasm. The enzyme catalyses a primary alcohol + NAD(+) = an aldehyde + NADH + H(+). It carries out the reaction a secondary alcohol + NAD(+) = a ketone + NADH + H(+). The catalysed reaction is S-(hydroxymethyl)glutathione + NADP(+) = S-formylglutathione + NADPH + H(+). It catalyses the reaction S-(hydroxymethyl)glutathione + NAD(+) = S-formylglutathione + NADH + H(+). In terms of biological role, class-III ADH is remarkably ineffective in oxidizing ethanol, but it readily catalyzes the oxidation of long-chain primary alcohols and the oxidation of S-(hydroxymethyl) glutathione. Plays a role in the calcium flux to the cytoplasm in the ASJ sensory neurons upon removal of a nitric oxide stimulus. This is Alcohol dehydrogenase class-3 from Caenorhabditis elegans.